An 808-amino-acid chain; its full sequence is Zinc finger protein 148 (808 aa).

Disordered regions lie at residues 15-86 (SPVG…ISQD) and 131-162 (DSLI…SPAK). The segment covering 56–73 (AEDDDDEDEEEDDDDDLA) has biased composition (acidic residues). Residues 150–159 (HKKKKRKQRS) are compositionally biased toward basic residues. 4 C2H2-type zinc fingers span residues 180 to 202 (HICE…VFIH), 208 to 230 (FQCN…EKIH), 236 to 258 (FRCD…KRTH), and 264 to 287 (YQCD…RMCH). Disordered stretches follow at residues 305–338 (RTPE…ASIT), 596–617 (SINS…QAPP), and 705–736 (SFSG…DPQS). 2 stretches are compositionally biased toward polar residues: residues 705–718 (SFSG…SVSP) and 725–736 (QVTSPKKTDPQS).

The protein belongs to the krueppel C2H2-type zinc-finger protein family.

It localises to the nucleus. Its function is as follows. Involved in transcriptional regulation. Represses the transcription of a number of genes. Required for primitive and definitive hematopoiesis during embryonic development. This is Zinc finger protein 148 (znf148) from Danio rerio (Zebrafish).